The following is a 336-amino-acid chain: Electron transfer flavoprotein subunit alpha (336 aa).

Residue Leu275–Asp303 participates in FAD binding.

It belongs to the ETF alpha-subunit/FixB family. Heterodimer of an alpha and a beta subunit. Requires FAD as cofactor.

Functionally, the electron transfer flavoprotein serves as a specific electron acceptor for other dehydrogenases. It transfers the electrons to the main respiratory chain via ETF-ubiquinone oxidoreductase (ETF dehydrogenase). This is Electron transfer flavoprotein subunit alpha (etfA) from Clostridium acetobutylicum (strain ATCC 824 / DSM 792 / JCM 1419 / IAM 19013 / LMG 5710 / NBRC 13948 / NRRL B-527 / VKM B-1787 / 2291 / W).